A 213-amino-acid chain; its full sequence is Thiamine-phosphate synthase (213 aa).

Residues 39–43 and Asn71 each bind 4-amino-2-methyl-5-(diphosphooxymethyl)pyrimidine; that span reads QLREK. Asp72 and Asp91 together coordinate Mg(2+). Ser110 is a 4-amino-2-methyl-5-(diphosphooxymethyl)pyrimidine binding site. A 2-[(2R,5Z)-2-carboxy-4-methylthiazol-5(2H)-ylidene]ethyl phosphate-binding site is contributed by 136-138; that stretch reads TGT. Position 139 (Lys139) interacts with 4-amino-2-methyl-5-(diphosphooxymethyl)pyrimidine. Residues Gly166 and 186–187 contribute to the 2-[(2R,5Z)-2-carboxy-4-methylthiazol-5(2H)-ylidene]ethyl phosphate site; that span reads VS.

The protein belongs to the thiamine-phosphate synthase family. Requires Mg(2+) as cofactor.

It carries out the reaction 2-[(2R,5Z)-2-carboxy-4-methylthiazol-5(2H)-ylidene]ethyl phosphate + 4-amino-2-methyl-5-(diphosphooxymethyl)pyrimidine + 2 H(+) = thiamine phosphate + CO2 + diphosphate. The enzyme catalyses 2-(2-carboxy-4-methylthiazol-5-yl)ethyl phosphate + 4-amino-2-methyl-5-(diphosphooxymethyl)pyrimidine + 2 H(+) = thiamine phosphate + CO2 + diphosphate. It catalyses the reaction 4-methyl-5-(2-phosphooxyethyl)-thiazole + 4-amino-2-methyl-5-(diphosphooxymethyl)pyrimidine + H(+) = thiamine phosphate + diphosphate. Its pathway is cofactor biosynthesis; thiamine diphosphate biosynthesis; thiamine phosphate from 4-amino-2-methyl-5-diphosphomethylpyrimidine and 4-methyl-5-(2-phosphoethyl)-thiazole: step 1/1. Its function is as follows. Condenses 4-methyl-5-(beta-hydroxyethyl)thiazole monophosphate (THZ-P) and 2-methyl-4-amino-5-hydroxymethyl pyrimidine pyrophosphate (HMP-PP) to form thiamine monophosphate (TMP). This chain is Thiamine-phosphate synthase, found in Clostridium botulinum (strain Eklund 17B / Type B).